The sequence spans 543 residues: MTVTAVNVLISLGVAALAVAVWKAIVMVIQIATSPLRNIPGPPNSNWVYGNLKEIFATENSVLHEGWVAKYGNTIKYKGWLSRNRLFTVDTRALNYILSHSNEYQKPALARYNLGEVLGEGLLIVEGEQHRQQRRIMNPAFGPAQIRELTEIFVEKAQKLCLFWRNEISKSGEPARIDVLNGLSKMTLDVIGLAGFNYEFDSLNIDGKPNELNQAFSVMFRSLEGFAIVFPLLKALIPPLRLIPDGRSRRIAKARKVMRRMGMELITKKKAEILRAAAGEKEKDNLQSRDLLTLLIKANLATDLPESHRLSDEDVLAQVPTFLVAGHETTSNATAWCLYALTQAPEVQQKLREELWSIPTENPSMDELNELPYLEAVVRETMRVHAPVPSTIRVAMTDDVIPLDTPFVDVHGQVQDSIRVKKGDPIFIPILVINRSKALWGEDAFEFKPERWESVPDAVQHIPGVWANQMSFLGGPRACIGYRFSLIEMKALIFALVRAFEFELAVPPEEIMKKSTAVQRPLVRSEMDKGCQLPLLIKPYHTV.

Residues 9 to 29 (LISLGVAALAVAVWKAIVMVI) form a helical membrane-spanning segment. N-linked (GlcNAc...) asparagine glycans are attached at residues Asn332 and Asn434. Cys479 contacts heme.

Belongs to the cytochrome P450 family. It depends on heme as a cofactor.

It is found in the membrane. Its pathway is secondary metabolite biosynthesis. In terms of biological role, cytochrome P450 monooxygenase that is able to use carbazole and phenanthrene as substrates for oxidation. This is Cytochrome P450 monooxygenase 205 from Postia placenta (strain ATCC 44394 / Madison 698-R) (Brown rot fungus).